Consider the following 219-residue polypeptide: Small ribosomal subunit protein uS3 (219 aa).

Residues 38–106 (IREYITARLK…RVHINILEVK (69 aa)) form the KH type-2 domain.

The protein belongs to the universal ribosomal protein uS3 family. Part of the 30S ribosomal subunit. Forms a tight complex with proteins S10 and S14.

Its function is as follows. Binds the lower part of the 30S subunit head. Binds mRNA in the 70S ribosome, positioning it for translation. In Bacillus cytotoxicus (strain DSM 22905 / CIP 110041 / 391-98 / NVH 391-98), this protein is Small ribosomal subunit protein uS3.